The following is an 844-amino-acid chain: E3 ubiquitin-protein ligase BRE1-like 2 (844 aa).

Coiled coils occupy residues 1 to 38 and 160 to 240; these read MDAAALQYENQKLVQQLEAQKSKMRALEGKFKELRDEQ and EDVI…QLQT. Positions 244–269 are disordered; it reads SLMNTSAPNGVNGSVSTDKSSDKGMG. Positions 245–261 are enriched in polar residues; that stretch reads LMNTSAPNGVNGSVSTD. Coiled coils occupy residues 290 to 604 and 640 to 670; these read ELHE…SEIE and KMKQAYGSLLAEKNMLQKQLQHVNSSLESSK. An RING-type zinc finger spans residues 792–831; sequence CGVCFDRPKEVVITKCFHLFCSPCIQRNLEIRHRKCPGCG.

Belongs to the BRE1 family.

The protein resides in the nucleus. It catalyses the reaction S-ubiquitinyl-[E2 ubiquitin-conjugating enzyme]-L-cysteine + [acceptor protein]-L-lysine = [E2 ubiquitin-conjugating enzyme]-L-cysteine + N(6)-ubiquitinyl-[acceptor protein]-L-lysine.. Its pathway is protein modification; protein ubiquitination. E3 ubiquitin-protein ligase that monoubiquitinates H2B to form H2BK143ub1. H2BK143ub1 gives a specific tag for epigenetic transcriptional activation and is also prerequisite for H3K4me and maybe H3K79me. It thereby plays a central role in histone code and gene regulation. Forms a ubiquitin ligase complex in cooperation with the E2 enzyme UBC2/RAD6. The chain is E3 ubiquitin-protein ligase BRE1-like 2 (BRE1B) from Oryza sativa subsp. indica (Rice).